The primary structure comprises 236 residues: Phosphoribosylaminoimidazole-succinocarboxamide synthase (236 aa).

Belongs to the SAICAR synthetase family.

The enzyme catalyses 5-amino-1-(5-phospho-D-ribosyl)imidazole-4-carboxylate + L-aspartate + ATP = (2S)-2-[5-amino-1-(5-phospho-beta-D-ribosyl)imidazole-4-carboxamido]succinate + ADP + phosphate + 2 H(+). The protein operates within purine metabolism; IMP biosynthesis via de novo pathway; 5-amino-1-(5-phospho-D-ribosyl)imidazole-4-carboxamide from 5-amino-1-(5-phospho-D-ribosyl)imidazole-4-carboxylate: step 1/2. This Rickettsia typhi (strain ATCC VR-144 / Wilmington) protein is Phosphoribosylaminoimidazole-succinocarboxamide synthase.